Consider the following 158-residue polypeptide: 2-C-methyl-D-erythritol 2,4-cyclodiphosphate synthase (158 aa).

D8 and H10 together coordinate a divalent metal cation. 4-CDP-2-C-methyl-D-erythritol 2-phosphate is bound by residues 8-10 (DVH) and 34-35 (HS). H42 is a binding site for a divalent metal cation. 4-CDP-2-C-methyl-D-erythritol 2-phosphate is bound by residues 56–58 (DIG), 61–65 (FPDTD), 100–106 (AQKPKML), 132–135 (TTEE), and F139.

It belongs to the IspF family. As to quaternary structure, homotrimer. The cofactor is a divalent metal cation.

The enzyme catalyses 4-CDP-2-C-methyl-D-erythritol 2-phosphate = 2-C-methyl-D-erythritol 2,4-cyclic diphosphate + CMP. The protein operates within isoprenoid biosynthesis; isopentenyl diphosphate biosynthesis via DXP pathway; isopentenyl diphosphate from 1-deoxy-D-xylulose 5-phosphate: step 4/6. In terms of biological role, involved in the biosynthesis of isopentenyl diphosphate (IPP) and dimethylallyl diphosphate (DMAPP), two major building blocks of isoprenoid compounds. Catalyzes the conversion of 4-diphosphocytidyl-2-C-methyl-D-erythritol 2-phosphate (CDP-ME2P) to 2-C-methyl-D-erythritol 2,4-cyclodiphosphate (ME-CPP) with a corresponding release of cytidine 5-monophosphate (CMP). In Clostridium beijerinckii (strain ATCC 51743 / NCIMB 8052) (Clostridium acetobutylicum), this protein is 2-C-methyl-D-erythritol 2,4-cyclodiphosphate synthase.